We begin with the raw amino-acid sequence, 467 residues long: Serine decarboxylase 2 (467 aa).

His-178 contacts substrate. The residue at position 290 (Lys-290) is an N6-(pyridoxal phosphate)lysine.

Belongs to the group II decarboxylase family. Pyridoxal 5'-phosphate is required as a cofactor.

The catalysed reaction is L-serine + H(+) = ethanolamine + CO2. Catalyzes the biosynthesis of ethanolamine from serine. Decarboxylation of free serine is the major source of ethanolamine production in plants and ethanolamine metabolism is crucial for the synthesis of choline, phosphatidylethanolamine (PE) and phosphatidylcholine (PC), and thus for plant growth. The protein is Serine decarboxylase 2 of Oryza sativa subsp. japonica (Rice).